The primary structure comprises 214 residues: Probable transaldolase (214 aa).

Lysine 83 (schiff-base intermediate with substrate) is an active-site residue.

This sequence belongs to the transaldolase family. Type 3B subfamily.

The protein localises to the cytoplasm. The enzyme catalyses D-sedoheptulose 7-phosphate + D-glyceraldehyde 3-phosphate = D-erythrose 4-phosphate + beta-D-fructose 6-phosphate. The protein operates within carbohydrate degradation; pentose phosphate pathway; D-glyceraldehyde 3-phosphate and beta-D-fructose 6-phosphate from D-ribose 5-phosphate and D-xylulose 5-phosphate (non-oxidative stage): step 2/3. Functionally, transaldolase is important for the balance of metabolites in the pentose-phosphate pathway. The sequence is that of Probable transaldolase from Citrifermentans bemidjiense (strain ATCC BAA-1014 / DSM 16622 / JCM 12645 / Bem) (Geobacter bemidjiensis).